The chain runs to 453 residues: Tryptophan biosynthesis protein TrpCF (453 aa).

The interval 1-257 (MMQTVLAKIV…AAVRRVLLGE (257 aa)) is indole-3-glycerol phosphate synthase. The tract at residues 258–453 (NKVCGLTRGQ…ASVFQTLRAY (196 aa)) is N-(5'-phosphoribosyl)anthranilate isomerase.

The protein in the N-terminal section; belongs to the TrpC family. This sequence in the C-terminal section; belongs to the TrpF family. Monomer.

It catalyses the reaction N-(5-phospho-beta-D-ribosyl)anthranilate = 1-(2-carboxyphenylamino)-1-deoxy-D-ribulose 5-phosphate. The catalysed reaction is 1-(2-carboxyphenylamino)-1-deoxy-D-ribulose 5-phosphate + H(+) = (1S,2R)-1-C-(indol-3-yl)glycerol 3-phosphate + CO2 + H2O. It participates in amino-acid biosynthesis; L-tryptophan biosynthesis; L-tryptophan from chorismate: step 3/5. Its pathway is amino-acid biosynthesis; L-tryptophan biosynthesis; L-tryptophan from chorismate: step 4/5. Its function is as follows. Bifunctional enzyme that catalyzes two sequential steps of tryptophan biosynthetic pathway. The first reaction is catalyzed by the isomerase, coded by the TrpF domain; the second reaction is catalyzed by the synthase, coded by the TrpC domain. The polypeptide is Tryptophan biosynthesis protein TrpCF (trpC) (Escherichia coli (strain K12)).